Consider the following 840-residue polypeptide: Sorting nexin-25 (840 aa).

Positions 1–164 (MDRVLRDVFD…MLLRQLEYRE (164 aa)) constitute a PXA domain. The RGS domain occupies 287 to 401 (QFEDIMTNPF…LVSDLYEKLM (115 aa)). The disordered stretch occupies residues 404–437 (EEEEEPDAQLASEKDELGSGGEAGEEAVEGTSGV). Residues 446–494 (IKLRELNEKLEYKRQALSSIQNAPKPDKKIISKLKDEILLIEKECTALQ) adopt a coiled-coil conformation. Positions 508–628 (GLWRASITSA…AFLSPSPDYL (121 aa)) constitute a PX domain. Phosphoserine is present on Ser665.

This sequence belongs to the sorting nexin family.

The protein localises to the endosome membrane. Its function is as follows. May be involved in several stages of intracellular trafficking. This chain is Sorting nexin-25 (Snx25), found in Mus musculus (Mouse).